A 374-amino-acid chain; its full sequence is Chaperone protein DnaJ (374 aa).

The 66-residue stretch at 4-69 (SYYEILEITQ…EKRAIYDRYG (66 aa)) folds into the J domain. The CR-type zinc finger occupies 136–213 (GCKKNIDFTY…CKGLGYNESK (78 aa)). Residues C149, C152, C165, C168, C187, C190, C201, and C204 each coordinate Zn(2+). CXXCXGXG motif repeat units lie at residues 149–156 (CKTCNGTG), 165–172 (CPKCQGRG), 187–194 (CPDCQGSG), and 201–208 (CSDCKGLG).

The protein belongs to the DnaJ family. As to quaternary structure, homodimer. Zn(2+) serves as cofactor.

It localises to the cytoplasm. Participates actively in the response to hyperosmotic and heat shock by preventing the aggregation of stress-denatured proteins and by disaggregating proteins, also in an autonomous, DnaK-independent fashion. Unfolded proteins bind initially to DnaJ; upon interaction with the DnaJ-bound protein, DnaK hydrolyzes its bound ATP, resulting in the formation of a stable complex. GrpE releases ADP from DnaK; ATP binding to DnaK triggers the release of the substrate protein, thus completing the reaction cycle. Several rounds of ATP-dependent interactions between DnaJ, DnaK and GrpE are required for fully efficient folding. Also involved, together with DnaK and GrpE, in the DNA replication of plasmids through activation of initiation proteins. In Campylobacter jejuni subsp. jejuni serotype O:6 (strain 81116 / NCTC 11828), this protein is Chaperone protein DnaJ.